The primary structure comprises 236 residues: UPF0280 protein Mlab_0453 (236 aa).

Belongs to the UPF0280 family.

The chain is UPF0280 protein Mlab_0453 from Methanocorpusculum labreanum (strain ATCC 43576 / DSM 4855 / Z).